A 220-amino-acid polypeptide reads, in one-letter code: Ribosomal RNA large subunit methyltransferase E (220 aa).

Residues glycine 64, tryptophan 66, aspartate 92, aspartate 108, and aspartate 133 each contribute to the S-adenosyl-L-methionine site. Catalysis depends on lysine 173, which acts as the Proton acceptor.

The protein belongs to the class I-like SAM-binding methyltransferase superfamily. RNA methyltransferase RlmE family.

The protein resides in the cytoplasm. The catalysed reaction is uridine(2552) in 23S rRNA + S-adenosyl-L-methionine = 2'-O-methyluridine(2552) in 23S rRNA + S-adenosyl-L-homocysteine + H(+). Functionally, specifically methylates the uridine in position 2552 of 23S rRNA at the 2'-O position of the ribose in the fully assembled 50S ribosomal subunit. The sequence is that of Ribosomal RNA large subunit methyltransferase E from Acidovorax sp. (strain JS42).